The primary structure comprises 80 residues: Cell division activator CedA (80 aa).

It belongs to the CedA family.

In terms of biological role, activates the cell division inhibited by chromosomal DNA over-replication. This Escherichia coli O1:K1 / APEC protein is Cell division activator CedA.